We begin with the raw amino-acid sequence, 108 residues long: L-rhamnose mutarotase (108 aa).

Tyr18 provides a ligand contact to substrate. Residue His22 is the Proton donor of the active site. Substrate-binding positions include Tyr41 and 76–77 (WW).

The protein belongs to the rhamnose mutarotase family. Homodimer.

The protein localises to the cytoplasm. The catalysed reaction is alpha-L-rhamnose = beta-L-rhamnose. The protein operates within carbohydrate metabolism; L-rhamnose metabolism. Functionally, involved in the anomeric conversion of L-rhamnose. This chain is L-rhamnose mutarotase, found in Paraburkholderia phymatum (strain DSM 17167 / CIP 108236 / LMG 21445 / STM815) (Burkholderia phymatum).